The chain runs to 157 residues: 2-C-methyl-D-erythritol 2,4-cyclodiphosphate synthase (157 aa).

Aspartate 8 and histidine 10 together coordinate a divalent metal cation. 4-CDP-2-C-methyl-D-erythritol 2-phosphate contacts are provided by residues aspartate 8–histidine 10 and histidine 34–serine 35. Histidine 42 serves as a coordination point for a divalent metal cation. 4-CDP-2-C-methyl-D-erythritol 2-phosphate is bound by residues aspartate 56–glycine 58, phenylalanine 61–aspartate 65, alanine 100–alanine 106, threonine 132–glutamate 135, phenylalanine 139, and arginine 142.

Belongs to the IspF family. As to quaternary structure, homotrimer. A divalent metal cation serves as cofactor.

It catalyses the reaction 4-CDP-2-C-methyl-D-erythritol 2-phosphate = 2-C-methyl-D-erythritol 2,4-cyclic diphosphate + CMP. The protein operates within isoprenoid biosynthesis; isopentenyl diphosphate biosynthesis via DXP pathway; isopentenyl diphosphate from 1-deoxy-D-xylulose 5-phosphate: step 4/6. Involved in the biosynthesis of isopentenyl diphosphate (IPP) and dimethylallyl diphosphate (DMAPP), two major building blocks of isoprenoid compounds. Catalyzes the conversion of 4-diphosphocytidyl-2-C-methyl-D-erythritol 2-phosphate (CDP-ME2P) to 2-C-methyl-D-erythritol 2,4-cyclodiphosphate (ME-CPP) with a corresponding release of cytidine 5-monophosphate (CMP). The polypeptide is 2-C-methyl-D-erythritol 2,4-cyclodiphosphate synthase (Pseudomonas entomophila (strain L48)).